Consider the following 1759-residue polypeptide: Histone-lysine N-methyltransferase ASHH2 (1759 aa).

3 stretches are compositionally biased toward basic and acidic residues: residues 154-165 (QEKEAPQAKEDE), 197-206 (ETTKHIKPDE), and 215-224 (RFDDGGKEGR). Disordered regions lie at residues 154–181 (QEKE…GIDT), 197–237 (ETTK…GSSD), 437–482 (CEAG…IESI), 515–556 (SNNI…NRNI), and 738–816 (DELR…VGRI). Positions 462 to 472 (SARHLRKSSRK) are enriched in basic residues. Over residues 530-556 (RSQGNLNNGEHNRSSHNGNVEGSNRNI) the composition is skewed to polar residues. Residues 758–775 (KKAKHPKSKSNGTKKGKS) show a composition bias toward basic residues. Composition is skewed to basic and acidic residues over residues 776–797 (KFSE…EQRK) and 804–816 (GRDD…VGRI). Residues 859 to 912 (YSTESAWVRCDDCFKWRRIPASVVGSIDESSRWICMNNSDKRFADCSKSQEMSN) form a CW-type zinc finger. Zn(2+) contacts are provided by cysteine 868, cysteine 871, cysteine 893, and cysteine 904. Residues 974–1024 (DEIMVCHCKPSPDGRLGCGEECLNRMLNIECLQGTCPAGDLCSNQQFQKRK) enclose the AWS domain. The SET domain occupies 1026–1143 (VKFERFQSGK…KGQELTFDYN (118 aa)). Tyrosine 1142 serves as a coordination point for S-adenosyl-L-methionine. The Post-SET domain maps to 1151–1167 (AAKKCYCGSSHCRGYIG). Disordered regions lie at residues 1225–1253 (GYKD…PPPL), 1271–1345 (AVQQ…PGVN), 1496–1606 (ERSE…FSSP), and 1727–1759 (KQSV…KLNS). Positions 1232–1241 (DNTQTQSSVS) are enriched in polar residues. Residues 1284–1293 (STSPTSSSLS) are compositionally biased toward low complexity. The span at 1304 to 1316 (KTTKHGSGEDKKI) shows a compositional bias: basic and acidic residues. Positions 1317 to 1326 (LPRPRPRMKT) are enriched in basic residues. Over residues 1511–1521 (ASQEPRYDHQS) the composition is skewed to basic and acidic residues. Positions 1530 to 1556 (SVTSSKAATPETASVSEGYSEPNSGLP) are enriched in polar residues. Positions 1566 to 1577 (RWDQPSKTKEQR) are enriched in basic and acidic residues. The span at 1581 to 1594 (ILSQQTDETNGNQD) shows a compositional bias: polar residues.

It belongs to the class V-like SAM-binding methyltransferase superfamily. Histone-lysine methyltransferase family. SET2 subfamily. As to quaternary structure, interacts with FRI and SUF4, two components of the transcription activator complex FRI-C, and with SWC6, a component of the SWR1 chromatin-remodeling complex. Interacts with BZR2/BES1 and IWS1. As to expression, ubiquitous, with higher levels in young tissues, including shoot and root apex. Expressed in ovules, tapetum layer and microspores.

It localises to the nucleus. The protein resides in the chromosome. Its subcellular location is the centromere. The catalysed reaction is N(6)-methyl-L-lysyl(36)-[histone H3] + S-adenosyl-L-methionine = N(6),N(6)-dimethyl-L-lysyl(36)-[histone H3] + S-adenosyl-L-homocysteine + H(+). The enzyme catalyses N(6),N(6)-dimethyl-L-lysyl(36)-[histone H3] + S-adenosyl-L-methionine = N(6),N(6),N(6)-trimethyl-L-lysyl(36)-[histone H3] + S-adenosyl-L-homocysteine + H(+). Histone methyltransferase involved in di and tri-methylation of 'Lys-36' of histone H3 (H3K36me2 and H3K36me3). Binds to H3 already mono- or di-methylated on 'Lys-4'(H3K4me1 or H3K4me2), but not to H3K4me3. H3K4me and H3K36me represent specific tags for epigenetic transcriptional activation. Positively regulates FLC transcription to prevent early flowering transition. Required for flowering transition in response to vernalization and for the maintenance of FLC expression in late embryos, but dispensable for the initial reactivation in early embryos during reprogramming. Also seems to modulate several traits including floral organ size, root size and dormancy. Promotes apical dominance. Directly involved in the tri-methylation of 'Lys-36' of histone H3 (H3K36me3) at LAZ5 chromatin to maintain a transcriptionally active state of LAZ5, a TIR-NB-LRR protein involved in innate immunity. Required for brassinosteroid (BR)-induced gene expression and histone H3 trimethylation on 'Lys-36' (H3K36me3) in BR-regulated genes. In Arabidopsis thaliana (Mouse-ear cress), this protein is Histone-lysine N-methyltransferase ASHH2.